The primary structure comprises 339 residues: Methionine import ATP-binding protein MetN 2 (339 aa).

Residues 2-241 form the ABC transporter domain; sequence ISFNNVSKVY…PKTTTTQNFV (240 aa). ATP is bound at residue 38 to 45; the sequence is GFSGAGKS.

It belongs to the ABC transporter superfamily. Methionine importer (TC 3.A.1.24) family. As to quaternary structure, the complex is composed of two ATP-binding proteins (MetN), two transmembrane proteins (MetI) and a solute-binding protein (MetQ).

Its subcellular location is the cell membrane. It carries out the reaction L-methionine(out) + ATP + H2O = L-methionine(in) + ADP + phosphate + H(+). The enzyme catalyses D-methionine(out) + ATP + H2O = D-methionine(in) + ADP + phosphate + H(+). Its function is as follows. Part of the ABC transporter complex MetNIQ involved in methionine import. Responsible for energy coupling to the transport system. The sequence is that of Methionine import ATP-binding protein MetN 2 from Bacillus anthracis.